We begin with the raw amino-acid sequence, 61 residues long: Large ribosomal subunit protein bL32 (61 aa).

Over residues Met1–Arg16 the composition is skewed to basic residues. Residues Met1–Asp20 form a disordered region.

This sequence belongs to the bacterial ribosomal protein bL32 family.

The polypeptide is Large ribosomal subunit protein bL32 (Trichlorobacter lovleyi (strain ATCC BAA-1151 / DSM 17278 / SZ) (Geobacter lovleyi)).